Consider the following 482-residue polypeptide: tRNA sulfurtransferase (482 aa).

One can recognise a THUMP domain in the interval 61–165 (EAIRDALTRI…QDRLLLIKSR (105 aa)). Residues 183–184 (LI), Lys-265, Gly-287, and Gln-296 contribute to the ATP site. A disulfide bond links Cys-344 and Cys-456. Positions 404-482 (FVPTDVLLDI…GFSNVKVYRP (79 aa)) constitute a Rhodanese domain. Residue Cys-456 is the Cysteine persulfide intermediate of the active site.

Belongs to the ThiI family.

It localises to the cytoplasm. The enzyme catalyses [ThiI sulfur-carrier protein]-S-sulfanyl-L-cysteine + a uridine in tRNA + 2 reduced [2Fe-2S]-[ferredoxin] + ATP + H(+) = [ThiI sulfur-carrier protein]-L-cysteine + a 4-thiouridine in tRNA + 2 oxidized [2Fe-2S]-[ferredoxin] + AMP + diphosphate. It catalyses the reaction [ThiS sulfur-carrier protein]-C-terminal Gly-Gly-AMP + S-sulfanyl-L-cysteinyl-[cysteine desulfurase] + AH2 = [ThiS sulfur-carrier protein]-C-terminal-Gly-aminoethanethioate + L-cysteinyl-[cysteine desulfurase] + A + AMP + 2 H(+). It functions in the pathway cofactor biosynthesis; thiamine diphosphate biosynthesis. Functionally, catalyzes the ATP-dependent transfer of a sulfur to tRNA to produce 4-thiouridine in position 8 of tRNAs, which functions as a near-UV photosensor. Also catalyzes the transfer of sulfur to the sulfur carrier protein ThiS, forming ThiS-thiocarboxylate. This is a step in the synthesis of thiazole, in the thiamine biosynthesis pathway. The sulfur is donated as persulfide by IscS. This Pectobacterium atrosepticum (strain SCRI 1043 / ATCC BAA-672) (Erwinia carotovora subsp. atroseptica) protein is tRNA sulfurtransferase.